The chain runs to 327 residues: Urease accessory protein 4 (327 aa).

Residue Asn120 is glycosylated (N-linked (GlcNAc...) asparagine). A helical membrane pass occupies residues 239–259 (VYATVLIIGPHLTTLFSYLAY).

This sequence belongs to the UreD family. As to quaternary structure, URE4, URE6 and URE7 may form a complex that acts as a GTP-hydrolysis-dependent molecular chaperone, activating the urease apoprotein URE1.

It localises to the membrane. Urease accessory protein required for the maturation and activation of urease via the functional incorporation of the urease nickel metallocenter. Plays a role in host brain invasion. The chain is Urease accessory protein 4 from Cryptococcus neoformans var. grubii serotype A (strain H99 / ATCC 208821 / CBS 10515 / FGSC 9487) (Filobasidiella neoformans var. grubii).